The sequence spans 138 residues: ATP synthase epsilon chain (138 aa).

The protein belongs to the ATPase epsilon chain family. F-type ATPases have 2 components, CF(1) - the catalytic core - and CF(0) - the membrane proton channel. CF(1) has five subunits: alpha(3), beta(3), gamma(1), delta(1), epsilon(1). CF(0) has three main subunits: a, b and c.

It is found in the cell inner membrane. Its function is as follows. Produces ATP from ADP in the presence of a proton gradient across the membrane. This Cupriavidus metallidurans (strain ATCC 43123 / DSM 2839 / NBRC 102507 / CH34) (Ralstonia metallidurans) protein is ATP synthase epsilon chain.